Reading from the N-terminus, the 208-residue chain is NAD(P)H-hydrate epimerase (208 aa).

A YjeF N-terminal domain is found at Met-11–Tyr-208. Asn-59–Asp-63 is a binding site for (6S)-NADPHX. K(+) is bound by residues Asn-60 and Asp-122. (6S)-NADPHX-binding positions include Gly-126–Pro-132, Tyr-137, and Asp-155. Ser-158 contacts K(+).

Belongs to the NnrE/AIBP family. Requires K(+) as cofactor.

It catalyses the reaction (6R)-NADHX = (6S)-NADHX. It carries out the reaction (6R)-NADPHX = (6S)-NADPHX. In terms of biological role, catalyzes the epimerization of the S- and R-forms of NAD(P)HX, a damaged form of NAD(P)H that is a result of enzymatic or heat-dependent hydration. This is a prerequisite for the S-specific NAD(P)H-hydrate dehydratase to allow the repair of both epimers of NAD(P)HX. This chain is NAD(P)H-hydrate epimerase, found in Limosilactobacillus fermentum (strain NBRC 3956 / LMG 18251) (Lactobacillus fermentum).